The following is a 72-amino-acid chain: ATP synthase subunit c (72 aa).

Transmembrane regions (helical) follow at residues 1-21 (MSLGVIAAAIAIGLSALGAGI) and 49-69 (FIGVALVEALPIIGVVIAFIV).

The protein belongs to the ATPase C chain family. In terms of assembly, F-type ATPases have 2 components, F(1) - the catalytic core - and F(0) - the membrane proton channel. F(1) has five subunits: alpha(3), beta(3), gamma(1), delta(1), epsilon(1). F(0) has three main subunits: a(1), b(2) and c(10-14). The alpha and beta chains form an alternating ring which encloses part of the gamma chain. F(1) is attached to F(0) by a central stalk formed by the gamma and epsilon chains, while a peripheral stalk is formed by the delta and b chains.

The protein resides in the cell membrane. Its function is as follows. F(1)F(0) ATP synthase produces ATP from ADP in the presence of a proton or sodium gradient. F-type ATPases consist of two structural domains, F(1) containing the extramembraneous catalytic core and F(0) containing the membrane proton channel, linked together by a central stalk and a peripheral stalk. During catalysis, ATP synthesis in the catalytic domain of F(1) is coupled via a rotary mechanism of the central stalk subunits to proton translocation. Key component of the F(0) channel; it plays a direct role in translocation across the membrane. A homomeric c-ring of between 10-14 subunits forms the central stalk rotor element with the F(1) delta and epsilon subunits. In Bacillus anthracis (strain A0248), this protein is ATP synthase subunit c.